We begin with the raw amino-acid sequence, 222 residues long: Gamma-glutamyl cyclotransferase gliK (222 aa).

The next 2 helical transmembrane spans lie at 154-174 (GWWF…AAII) and 187-207 (GHVP…MWAQ).

Belongs to the class-I pyridoxal-phosphate-dependent aminotransferase family.

The protein resides in the membrane. The catalysed reaction is an alpha-(gamma-L-glutamyl)-L-amino acid = 5-oxo-L-proline + an L-alpha-amino acid. The protein operates within secondary metabolite biosynthesis. Functionally, gamma-glutamyl cyclotransferase; part of the gene cluster that mediates the biosynthesis of an unusual class of epipolythiodioxopiperazines (ETPs) lacking the reactive thiol group important for toxicity. Firstly, L-tyrosine is prenylated by tcpD, before undergoing condensation with L-glycine in a reaction catalyzed by the NRPS tcpP leading to the diketopiperazine (DKP) backbone. Afterwards the alpha-carbon of tyrosine is oxidized by the cytochrome P450 tcpC to form a hydroxyl group. However, in contrast other ETP biosynthesis pathways studied so far, tcpC is not able to bishydroxylate the DKP at both alpha-carbon positions, but hydroxylates the alpha-carbon of the tyrosine part and the nitrogen of the glycine part. The next steps involve an alpha,beta-elimination reaction catalyzed by tcpI, a methylation by the methyltransferase tcpN the action of the four enzyme cascade tcpG/K/J/I. Due to a dysfunctional cytochrome P450 monooxygenase tcpC, the pathway leads to the biosynthesis of probable non-toxic metabolites lacking the reactive thiol group. The polypeptide is Gamma-glutamyl cyclotransferase gliK (Claviceps purpurea (strain 20.1) (Ergot fungus)).